A 367-amino-acid polypeptide reads, in one-letter code: Cobalt-precorrin-5B C(1)-methyltransferase (367 aa).

Belongs to the CbiD family.

The catalysed reaction is Co-precorrin-5B + S-adenosyl-L-methionine = Co-precorrin-6A + S-adenosyl-L-homocysteine. The protein operates within cofactor biosynthesis; adenosylcobalamin biosynthesis; cob(II)yrinate a,c-diamide from sirohydrochlorin (anaerobic route): step 6/10. Its function is as follows. Catalyzes the methylation of C-1 in cobalt-precorrin-5B to form cobalt-precorrin-6A. This Thermosynechococcus vestitus (strain NIES-2133 / IAM M-273 / BP-1) protein is Cobalt-precorrin-5B C(1)-methyltransferase.